Consider the following 294-residue polypeptide: Ribosomal RNA small subunit methyltransferase A (294 aa).

S-adenosyl-L-methionine-binding residues include asparagine 33, leucine 35, glycine 60, glutamate 81, aspartate 106, and asparagine 131.

The protein belongs to the class I-like SAM-binding methyltransferase superfamily. rRNA adenine N(6)-methyltransferase family. RsmA subfamily.

The protein localises to the cytoplasm. It carries out the reaction adenosine(1518)/adenosine(1519) in 16S rRNA + 4 S-adenosyl-L-methionine = N(6)-dimethyladenosine(1518)/N(6)-dimethyladenosine(1519) in 16S rRNA + 4 S-adenosyl-L-homocysteine + 4 H(+). Its function is as follows. Specifically dimethylates two adjacent adenosines (A1518 and A1519) in the loop of a conserved hairpin near the 3'-end of 16S rRNA in the 30S particle. May play a critical role in biogenesis of 30S subunits. The polypeptide is Ribosomal RNA small subunit methyltransferase A (Lactococcus lactis subsp. lactis (strain IL1403) (Streptococcus lactis)).